The sequence spans 143 residues: Protein SLC31A2 (143 aa).

The Extracellular segment spans residues 1 to 22; sequence MAMHFIFSDTAVLLFDFWSVHS. Residues 23–43 traverse the membrane as a helical segment; sequence PAGMALSVLVLLLLAVLYEGI. Residues 44 to 93 are Cytoplasmic-facing; it reads KVGKAKLLNQVLVNLPTSISQQTIAETDGDSAGSDSFPVGRTHHRWYLCH. Residue Ser-77 is modified to Phosphoserine. The helical transmembrane segment at 94–114 threads the bilayer; it reads FGQSLIHVIQVVIGYFIMLAV. The Extracellular segment spans residues 115–119; sequence MSYNT. The chain crosses the membrane as a helical span at residues 120–140; the sequence is WIFLGVVLGSAVGYYLAYPLL. Residues 141–143 are Cytoplasmic-facing; sequence STA.

It belongs to the copper transporter (Ctr) (TC 1.A.56) family. SLC31A subfamily. In terms of assembly, oligomer. Interacts with SLC31A1; this interaction stabilizes SLC31A2 and protects it from ubiquitination and the subsequent degradation. Post-translationally, ubiquitinated; ubiquitination and the subsequent proteasomal degradation are prevent by SLC31A1 that stabilizes it. Ubiquitous with high expression in placenta and heart.

Its subcellular location is the membrane. It localises to the cytoplasmic vesicle membrane. The protein localises to the late endosome membrane. The protein resides in the lysosome membrane. Functionally, does not function as a copper(1+) importer in vivo. However, in vitro functions as a low-affinity copper(1+) importer. Regulator of SLC31A1 which facilitates the cleavage of the SLC31A1 ecto-domain or which stabilizes the truncated form of SLC31A1 (Truncated CTR1 form), thereby drives the SLC31A1 truncated form-dependent endosomal copper export and modulates the copper and cisplatin accumulation via SLC31A1. This Homo sapiens (Human) protein is Protein SLC31A2.